Reading from the N-terminus, the 72-residue chain is Exodeoxyribonuclease 7 small subunit (72 aa).

The protein belongs to the XseB family. As to quaternary structure, heterooligomer composed of large and small subunits.

It localises to the cytoplasm. It carries out the reaction Exonucleolytic cleavage in either 5'- to 3'- or 3'- to 5'-direction to yield nucleoside 5'-phosphates.. Its function is as follows. Bidirectionally degrades single-stranded DNA into large acid-insoluble oligonucleotides, which are then degraded further into small acid-soluble oligonucleotides. The chain is Exodeoxyribonuclease 7 small subunit from Chlamydia trachomatis serovar D (strain ATCC VR-885 / DSM 19411 / UW-3/Cx).